The primary structure comprises 205 residues: Thymidylate kinase (205 aa).

13 to 20 (GIDGSGKS) is a binding site for ATP.

The protein belongs to the thymidylate kinase family.

The catalysed reaction is dTMP + ATP = dTDP + ADP. Phosphorylation of dTMP to form dTDP in both de novo and salvage pathways of dTTP synthesis. This is Thymidylate kinase from Leptospira borgpetersenii serovar Hardjo-bovis (strain L550).